A 458-amino-acid polypeptide reads, in one-letter code: Glycine--tRNA ligase (458 aa).

Positions 97 and 171 each coordinate substrate. ATP-binding positions include 203–205 (RNE), 213–218 (FRTREF), 287–288 (EL), and 331–334 (GADR). 218–222 (FEQME) contributes to the substrate binding site. Residue 327–331 (EPSLG) participates in substrate binding.

Belongs to the class-II aminoacyl-tRNA synthetase family. Homodimer.

The protein resides in the cytoplasm. The catalysed reaction is tRNA(Gly) + glycine + ATP = glycyl-tRNA(Gly) + AMP + diphosphate. In terms of biological role, catalyzes the attachment of glycine to tRNA(Gly). The protein is Glycine--tRNA ligase of Bacillus anthracis.